The sequence spans 394 residues: Serine palmitoyltransferase (394 aa).

Pyridoxal 5'-phosphate is bound by residues 111-112 (GF), serine 183, histidine 211, and threonine 239. Lysine 242 carries the N6-(pyridoxal phosphate)lysine modification.

The protein belongs to the class-II pyridoxal-phosphate-dependent aminotransferase family. Pyridoxal 5'-phosphate serves as cofactor.

The enzyme catalyses L-serine + hexadecanoyl-CoA + H(+) = 3-oxosphinganine + CO2 + CoA. It participates in lipid metabolism; sphingolipid metabolism. Functionally, involved in de novo bacterial ceramide synthesis. Catalyzes the condensation of L-serine with palmitoyl-CoA (hexadecanoyl-CoA) to produce 3-oxosphinganine. Also capable of using alanine as substrate leading to the formation of 1-deoxysphinganine (1-deoxySa). Contributes to the levels of endogenous sphingolipids in its host. The sequence is that of Serine palmitoyltransferase from Bacteroides ovatus (strain ATCC 8483 / DSM 1896 / JCM 5824 / BCRC 10623 / CCUG 4943 / NCTC 11153).